The sequence spans 77 residues: Probable Vpr-like protein (77 aa).

Residues 34–42 (LIRLLQGLL) carry the Nuclear export signal motif. The short motif at 44-53 (RLRFRKPKSK) is the Nuclear localization signal element.

It is found in the virion. Its subcellular location is the host nucleus. Functionally, seems to function as a Vpr-like protein, since it mediates host cell cycle arrest in G2 phase. Cell cycle arrest creates a favorable environment for maximizing viral expression and production. The chain is Probable Vpr-like protein from Felidae (cat family).